The chain runs to 96 residues: Co-chaperonin GroES (96 aa).

The interval 26–48 is disordered; sequence LLPGSAQEKPSQGEVLATGNGQI.

The protein belongs to the GroES chaperonin family. In terms of assembly, heptamer of 7 subunits arranged in a ring. Interacts with the chaperonin GroEL.

The protein resides in the cytoplasm. Its function is as follows. Together with the chaperonin GroEL, plays an essential role in assisting protein folding. The GroEL-GroES system forms a nano-cage that allows encapsulation of the non-native substrate proteins and provides a physical environment optimized to promote and accelerate protein folding. GroES binds to the apical surface of the GroEL ring, thereby capping the opening of the GroEL channel. The sequence is that of Co-chaperonin GroES from Psychrobacter arcticus (strain DSM 17307 / VKM B-2377 / 273-4).